Here is a 231-residue protein sequence, read N- to C-terminus: Sporulation protein RMD6 (231 aa).

The protein localises to the peroxisome. Required for sporulation. Required for meiotic nuclear division. This Saccharomyces cerevisiae (strain ATCC 204508 / S288c) (Baker's yeast) protein is Sporulation protein RMD6 (RMD6).